Here is a 122-residue protein sequence, read N- to C-terminus: Small ribosomal subunit protein uS13 (122 aa).

Residues 93 to 122 are disordered; sequence RLSLPVRGQRTKTNSRTRKGKRKTVAGKKK. The span at 101 to 122 shows a compositional bias: basic residues; that stretch reads QRTKTNSRTRKGKRKTVAGKKK.

Belongs to the universal ribosomal protein uS13 family. As to quaternary structure, part of the 30S ribosomal subunit. Forms a loose heterodimer with protein S19. Forms two bridges to the 50S subunit in the 70S ribosome.

In terms of biological role, located at the top of the head of the 30S subunit, it contacts several helices of the 16S rRNA. In the 70S ribosome it contacts the 23S rRNA (bridge B1a) and protein L5 of the 50S subunit (bridge B1b), connecting the 2 subunits; these bridges are implicated in subunit movement. Contacts the tRNAs in the A and P-sites. This Chlamydia abortus (strain DSM 27085 / S26/3) (Chlamydophila abortus) protein is Small ribosomal subunit protein uS13.